Here is a 274-residue protein sequence, read N- to C-terminus: Energy-coupling factor transporter ATP-binding protein EcfA1 (274 aa).

Residues 10-241 (ASFQGVYFSY…AAELQKIRLD (232 aa)) enclose the ABC transporter domain. Residue 42–49 (GHNGSGKS) coordinates ATP.

Belongs to the ABC transporter superfamily. Energy-coupling factor EcfA family. As to quaternary structure, forms a stable energy-coupling factor (ECF) transporter complex composed of 2 membrane-embedded substrate-binding proteins (S component), 2 ATP-binding proteins (A component) and 2 transmembrane proteins (T component).

It is found in the cell membrane. Functionally, ATP-binding (A) component of a common energy-coupling factor (ECF) ABC-transporter complex. Unlike classic ABC transporters this ECF transporter provides the energy necessary to transport a number of different substrates. This chain is Energy-coupling factor transporter ATP-binding protein EcfA1, found in Mycoplasma pneumoniae (strain ATCC 29342 / M129 / Subtype 1) (Mycoplasmoides pneumoniae).